The chain runs to 95 residues: L-amino-acid oxidase (95 aa).

Belongs to the flavin monoamine oxidase family. FIG1 subfamily. Homodimer; non-covalently linked. FAD is required as a cofactor. N-glycosylated. In terms of tissue distribution, expressed by the venom gland.

It localises to the secreted. The catalysed reaction is an L-alpha-amino acid + O2 + H2O = a 2-oxocarboxylate + H2O2 + NH4(+). The enzyme catalyses L-leucine + O2 + H2O = 4-methyl-2-oxopentanoate + H2O2 + NH4(+). It catalyses the reaction L-phenylalanine + O2 + H2O = 3-phenylpyruvate + H2O2 + NH4(+). It carries out the reaction L-tryptophan + O2 + H2O = indole-3-pyruvate + H2O2 + NH4(+). The catalysed reaction is L-methionine + O2 + H2O = 4-methylsulfanyl-2-oxobutanoate + H2O2 + NH4(+). The enzyme catalyses L-arginine + O2 + H2O = 5-guanidino-2-oxopentanoate + H2O2 + NH4(+). In terms of biological role, catalyzes an oxidative deamination of predominantly hydrophobic and aromatic L-amino acids, thus producing hydrogen peroxide that may contribute to the diverse toxic effects of this enzyme. Is highly active on L-Met, L-Leu, L-Phe, L-Trp, and L-Arg, and no weakly or no active on L-His, L-Tyr, L-Ile, L-Gln, and L-Lys. Exhibits diverse biological activities, such as antibacterial activity against both Gram-positive (B.subtilis) and Gram-negative (E.coli) bacteria, and inhibition of ADP- or collagen-induced platelet aggregation. Effects of snake L-amino oxidases on platelets are controversial, since they either induce aggregation or inhibit agonist-induced aggregation. These different effects are probably due to different experimental conditions. This protein may also induce hemorrhage, hemolysis, edema, apoptosis, and have antiparasitic activities. The chain is L-amino-acid oxidase from Naja oxiana (Central Asian cobra).